The following is a 276-amino-acid chain: NADPH-dependent 7-cyano-7-deazaguanine reductase (276 aa).

83 to 85 (IES) is a binding site for substrate. 85-86 (SK) provides a ligand contact to NADPH. The active-site Thioimide intermediate is the C184. Residue D191 is the Proton donor of the active site. Substrate is bound at residue 223–224 (HE). 252 to 253 (RG) serves as a coordination point for NADPH.

The protein belongs to the GTP cyclohydrolase I family. QueF type 2 subfamily. Homodimer.

It is found in the cytoplasm. The catalysed reaction is 7-aminomethyl-7-carbaguanine + 2 NADP(+) = 7-cyano-7-deazaguanine + 2 NADPH + 3 H(+). The protein operates within tRNA modification; tRNA-queuosine biosynthesis. Its function is as follows. Catalyzes the NADPH-dependent reduction of 7-cyano-7-deazaguanine (preQ0) to 7-aminomethyl-7-deazaguanine (preQ1). This Pseudomonas fluorescens (strain SBW25) protein is NADPH-dependent 7-cyano-7-deazaguanine reductase.